A 456-amino-acid chain; its full sequence is Bifunctional protein GlmU (456 aa).

The pyrophosphorylase stretch occupies residues 1-229 (MLNSAMSVVI…ISETDGVNNR (229 aa)). Residues 11–14 (LAAG), lysine 25, glutamine 76, 81–82 (GT), 103–105 (YGD), glycine 140, glutamate 154, asparagine 169, and asparagine 227 each bind UDP-N-acetyl-alpha-D-glucosamine. Aspartate 105 is a Mg(2+) binding site. Asparagine 227 lines the Mg(2+) pocket. A linker region spans residues 230–250 (LQLSRLERIYQAEQAEKLLLS). The N-acetyltransferase stretch occupies residues 251-456 (GVMLRDPARF…QGWQRPVKKK (206 aa)). UDP-N-acetyl-alpha-D-glucosamine contacts are provided by arginine 333 and lysine 351. Histidine 363 acts as the Proton acceptor in catalysis. 2 residues coordinate UDP-N-acetyl-alpha-D-glucosamine: tyrosine 366 and asparagine 377. Residues alanine 380, 386-387 (NY), serine 405, alanine 423, and arginine 440 each bind acetyl-CoA.

This sequence in the N-terminal section; belongs to the N-acetylglucosamine-1-phosphate uridyltransferase family. The protein in the C-terminal section; belongs to the transferase hexapeptide repeat family. Homotrimer. The cofactor is Mg(2+).

It localises to the cytoplasm. It catalyses the reaction alpha-D-glucosamine 1-phosphate + acetyl-CoA = N-acetyl-alpha-D-glucosamine 1-phosphate + CoA + H(+). The catalysed reaction is N-acetyl-alpha-D-glucosamine 1-phosphate + UTP + H(+) = UDP-N-acetyl-alpha-D-glucosamine + diphosphate. It functions in the pathway nucleotide-sugar biosynthesis; UDP-N-acetyl-alpha-D-glucosamine biosynthesis; N-acetyl-alpha-D-glucosamine 1-phosphate from alpha-D-glucosamine 6-phosphate (route II): step 2/2. The protein operates within nucleotide-sugar biosynthesis; UDP-N-acetyl-alpha-D-glucosamine biosynthesis; UDP-N-acetyl-alpha-D-glucosamine from N-acetyl-alpha-D-glucosamine 1-phosphate: step 1/1. Its pathway is bacterial outer membrane biogenesis; LPS lipid A biosynthesis. Functionally, catalyzes the last two sequential reactions in the de novo biosynthetic pathway for UDP-N-acetylglucosamine (UDP-GlcNAc). The C-terminal domain catalyzes the transfer of acetyl group from acetyl coenzyme A to glucosamine-1-phosphate (GlcN-1-P) to produce N-acetylglucosamine-1-phosphate (GlcNAc-1-P), which is converted into UDP-GlcNAc by the transfer of uridine 5-monophosphate (from uridine 5-triphosphate), a reaction catalyzed by the N-terminal domain. This chain is Bifunctional protein GlmU, found in Salmonella paratyphi A (strain ATCC 9150 / SARB42).